The primary structure comprises 186 residues: Translation initiation factor IF-3 (186 aa).

Belongs to the IF-3 family. As to quaternary structure, monomer.

It is found in the cytoplasm. In terms of biological role, IF-3 binds to the 30S ribosomal subunit and shifts the equilibrium between 70S ribosomes and their 50S and 30S subunits in favor of the free subunits, thus enhancing the availability of 30S subunits on which protein synthesis initiation begins. This chain is Translation initiation factor IF-3, found in Borreliella afzelii (strain PKo) (Borrelia afzelii).